A 251-amino-acid chain; its full sequence is Protein FAM216A (251 aa).

Residues 1–41 (MPSRWPGVAGPPALARTEGGEGSAGHSYPQNSKGTGEQHKA) form a disordered region.

The protein belongs to the FAM216 family.

The protein is Protein FAM216A (Fam216a) of Mus musculus (Mouse).